Consider the following 621-residue polypeptide: MTLDISKYPTLALANTPEELRLLPKETLPTLCDELRTYLLNSVSQSSGHLASGLGTVELTVALHYVYNTPVDKLIWDVGHQAYPHKILTGRRDQMPTIRQKDGLHPFPWREESEYDTLSVGHSSTSISAGLGLAISAQKEGKGRKVISVIGDGAITAGMAFEAMNHAGDVHPDMLVILNDNEMSISENVGALNNHLAKVLSGSLYTSIREGGKKVLSGVPPIKELVRRTEEHLKGMVVPGTLFEEFGFNYIGPIDGHDVNELVKTLKNMRELKGPQFLHIMTKKGKGYEPAEKDPIGYHGVPKFDPSHNCLPKSSGGKPTFSKIFGDFLCDMAAQDPKLMAITPAMREGSGMVRFSKEFPDQYFDVAIAEQHAVTLATGMAIAGDHPIVAIYSTFLQRGYDQLIHDIAIMDLPVMFAIDRAGLVGADGQTHQGAFDLSFMRCIPNMVIMAPSDENECRQMLYTGHKHTGPSAVRYPRGSGMGTEIEKEFTALEIGKGRVVRKGEKVAILSFGTFLPNALEAAKNLNATVADMRFVKPLDEALIRQLADEHDVLVTLEENAIAGGAGAGVIEFMMKEKIIKPVLNLGLPDKFIHQGTQEELHEELGLDAKGIEKSIAEYLAK.

Thiamine diphosphate-binding positions include His-80 and 121 to 123 (GHS). Asp-152 is a binding site for Mg(2+). Thiamine diphosphate is bound by residues 153 to 154 (GA), Asn-181, Tyr-288, and Glu-370. Asn-181 is a Mg(2+) binding site.

This sequence belongs to the transketolase family. DXPS subfamily. Homodimer. Mg(2+) serves as cofactor. It depends on thiamine diphosphate as a cofactor.

The catalysed reaction is D-glyceraldehyde 3-phosphate + pyruvate + H(+) = 1-deoxy-D-xylulose 5-phosphate + CO2. Its pathway is metabolic intermediate biosynthesis; 1-deoxy-D-xylulose 5-phosphate biosynthesis; 1-deoxy-D-xylulose 5-phosphate from D-glyceraldehyde 3-phosphate and pyruvate: step 1/1. Functionally, catalyzes the acyloin condensation reaction between C atoms 2 and 3 of pyruvate and glyceraldehyde 3-phosphate to yield 1-deoxy-D-xylulose-5-phosphate (DXP). This is 1-deoxy-D-xylulose-5-phosphate synthase from Vibrio parahaemolyticus serotype O3:K6 (strain RIMD 2210633).